A 354-amino-acid chain; its full sequence is DNA integrity scanning protein DisA (354 aa).

In terms of domain architecture, DAC spans 6–144; that stretch reads GMKIKDTLKI…GDIKYVLRDS (139 aa). ATP contacts are provided by residues G73, L91, and 104–108; that span reads TRHRT.

It belongs to the DisA family. Homooctamer. It depends on Mg(2+) as a cofactor.

The catalysed reaction is 2 ATP = 3',3'-c-di-AMP + 2 diphosphate. Participates in a DNA-damage check-point that is active prior to asymmetric division when DNA is damaged. DisA forms globular foci that rapidly scan along the chromosomes during sporulation, searching for lesions. When a lesion is present, DisA pauses at the lesion site. This triggers a cellular response that culminates in a temporary block in sporulation initiation. Functionally, also has diadenylate cyclase activity, catalyzing the condensation of 2 ATP molecules into cyclic di-AMP (c-di-AMP). c-di-AMP acts as a signaling molecule that couples DNA integrity with progression of sporulation. The rise in c-di-AMP level generated by DisA while scanning the chromosome, operates as a positive signal that advances sporulation; upon encountering a lesion, the DisA focus arrests at the damaged site and halts c-di-AMP synthesis. This is DNA integrity scanning protein DisA from Clostridium botulinum (strain Eklund 17B / Type B).